The sequence spans 356 residues: MKALVLAGGSGTRLRPITHTSAKQLVAVANKPVLFYGLEAIAAAGITDVGLIVGDTAGEVPRAVGDGAKFGLDITYIEQSRPLGLAHAVLIAHTYLGDDDFVMYLGDNFIVGGIDDLVRTFRDGRRPAARILLTHVSDPSGFGVAELDDDGRVVGLEEKPRHPKSDLALVGVYFFTPAIHEAVRAIEPSWRGELEITHAIQHLIDNGADIQSMVIEGYWKDTGNVADMLEVNRTVLEDLEPRIEGTVDEHTVVIGRVVVGEGARVTNSRIMGPAIIGAGPEISDSYIGPFTSVGDNCRITGSEMEFSIMLAESAITGVRRIEGSLIGRNVQVTQSLHAPNAHRFVLGDHSKVEIQS.

Positions 107 and 221 each coordinate Mg(2+).

It belongs to the glucose-1-phosphate thymidylyltransferase family. The cofactor is Mg(2+).

It catalyses the reaction dTTP + alpha-D-glucose 1-phosphate + H(+) = dTDP-alpha-D-glucose + diphosphate. It participates in antibiotic biosynthesis. Involved in the biosynthesis of the two 2,6-deoxysugars, dTDP-L-oleandrose and dTDP-D-desosamine, attached to the macrolactone ring oleandolide to produce the aglycone antibiotic oleandomycin. Catalyzes the formation of dTDP-glucose from deoxythymidine triphosphate (dTTP) and glucose 1-phosphate. The protein is Glucose-1-phosphate thymidylyltransferase of Streptomyces antibioticus.